The following is an 801-amino-acid chain: Cadherin-20 (801 aa).

An N-terminal signal peptide occupies residues 1–34 (MWTSGRMSNAKNWLGLGMSLYFWGLMDLTTTVLS). Residues 35–59 (DTPTPQGELEALLSDKPQSHQRTKR) constitute a propeptide that is removed on maturation. Residues 60 to 619 (SWVWNQFFVL…AYMLPVSLSR (560 aa)) are Extracellular-facing. Cadherin domains are found at residues 61–165 (WVWN…EPKF), 166–274 (LDGP…PPRF), 275–389 (PQKH…PPVF), 390–494 (EPGF…APEF), and 494–610 (FPRF…SPEA). Asn-261 is a glycosylation site (N-linked (GlcNAc...) asparagine). N-linked (GlcNAc...) asparagine glycosylation is found at Asn-420, Asn-461, and Asn-542. A helical membrane pass occupies residues 620 to 640 (GALIAILACIFVLLVLVLLIL). Residues 641–801 (SMRRHRKQPY…GASEGPAPLW (161 aa)) lie on the Cytoplasmic side of the membrane.

In terms of tissue distribution, expressed in placenta, adult brain, and fetal brain.

The protein resides in the cell membrane. Its function is as follows. Cadherins are calcium-dependent cell adhesion proteins. They preferentially interact with themselves in a homophilic manner in connecting cells; cadherins may thus contribute to the sorting of heterogeneous cell types. In Homo sapiens (Human), this protein is Cadherin-20 (CDH20).